Reading from the N-terminus, the 147-residue chain is Cyanate hydratase (147 aa).

Catalysis depends on residues R88, E91, and S114.

It belongs to the cyanase family.

It carries out the reaction cyanate + hydrogencarbonate + 3 H(+) = NH4(+) + 2 CO2. Catalyzes the reaction of cyanate with bicarbonate to produce ammonia and carbon dioxide. This chain is Cyanate hydratase, found in Methylibium petroleiphilum (strain ATCC BAA-1232 / LMG 22953 / PM1).